Reading from the N-terminus, the 385-residue chain is MAAALFVLLGFALLGTHGASGAAGFVQAPLSQQRWVGGSVELHCEAVGSPVPEIQWWFEGQGPNDTCSQLWDGARLDRVHIHATYHQHAASTISIDTLVEEDTGTYECRASNDPDRNHLTRAPRVKWVRAQAVVLVLEPGTVFTTVEDLGSKILLTCSLNDSATEVTGHRWLKGGVVLKEDALPGQKTEFKVDSDDQWGEYSCVFLPEPMGTANIQLHGPPRVKAVKSSEHINEGETAMLVCKSESVPPVTDWAWYKITDSEDKALMNGSESRFFVSSSQGRSELHIENLNMEADPGQYRCNGTSSKGSDQAIITLRVRSHLAALWPFLGIVAEVLVLVTIIFIYEKRRKPEDVLDDDDAGSAPLKSSGQHQNDKGKNVRQRNSS.

An N-terminal signal peptide occupies residues 1 to 21 (MAAALFVLLGFALLGTHGASG). Residues 37–120 (GGSVELHCEA…SNDPDRNHLT (84 aa)) form the Ig-like domain. Intrachain disulfides connect Cys-44–Cys-108, Cys-157–Cys-203, and Cys-242–Cys-301. The region spanning 138-219 (EPGTVFTTVE…MGTANIQLHG (82 aa)) is the Ig-like C2-type domain. The Extracellular segment spans residues 138 to 323 (EPGTVFTTVE…ITLRVRSHLA (186 aa)). N-linked (GlcNAc...) asparagine glycosylation occurs at Asn-160. The essential for interaction with KDR/VEGFR2 stretch occupies residues 195-199 (DDQWG). Residues 221–315 (PRVKAVKSSE…SKGSDQAIIT (95 aa)) enclose the Ig-like V-type domain. Asn-268 and Asn-302 each carry an N-linked (GlcNAc...) asparagine glycan. Residues 324-344 (ALWPFLGIVAEVLVLVTIIFI) traverse the membrane as a helical segment. The Cytoplasmic segment spans residues 345–385 (YEKRRKPEDVLDDDDAGSAPLKSSGQHQNDKGKNVRQRNSS). The segment at 353 to 385 (DVLDDDDAGSAPLKSSGQHQNDKGKNVRQRNSS) is disordered. Residues Ser-362 and Ser-368 each carry the phosphoserine modification.

Homooligomer. Interacts with NXNL1. Interacts with SLC2A1 and SLC16A1/GLUT1. Interacts with XKR8; promoting its localization at the cell membrane. In terms of assembly, (Microbial infection) Interacts with P.falciparum (isolate 3D7) RH5/PfRH5; the interaction is required for the invasion of the host erythrocytes by the parasite at the merozoite stage. As to quaternary structure, homooligomer. Forms heterooligomers with isoform 3. Interacts with VEGFA and KDR/VEGFR2. Interacts with PPIA/CYPA. Interacts with PPIL2; regulates BSG transport to the cell membrane. Interacts with SLC16A1; interaction mediates SLC16A3 targeting to the plasma membrane. Interacts with SLC16A12. Interacts with SLC16A11. Interacts with AJAP1. Interacts with SLC1A3, ATP1B2, MAG and L1CAM. Interacts with SLC16A3; interaction mediates SLC16A3 targeting to the plasma membrane. (Microbial infection) Interacts with P.falciparum (isolates 3D7 or 7G8) RH5/PfRH5; the interaction is required for the invasion of the host erythrocytes by the parasite at the merozoite stage. In terms of assembly, (Microbial infection) Does not interact with severe acute respiratory syndrome coronavirus 2 (SARS-CoV-2) spike glycoprotein, even if previous works were based on a putative interaction. As to quaternary structure, forms heterooligomers with isoform 2. Interacts with SLC16A6; this interaction mediates targeting to the plasma membrane. Post-translationally, N-glycosylated. As to expression, retina-specific. Expressed in retinal cone photoreceptors (at protein level). Expressed in erythrocytes (at protein level). Highly expressed in melanoma cell lines (at protein level). Highly expressed in the heart, kidney, skeletal muscle and testis. In terms of tissue distribution, highly expressed in the bone marrow, fetal liver, lung, testis and thymus.

Its subcellular location is the melanosome. The protein localises to the cell membrane. It localises to the photoreceptor inner segment. The protein resides in the cell projection. It is found in the cilium. Its subcellular location is the photoreceptor outer segment. The protein localises to the endosome. It localises to the endoplasmic reticulum membrane. The protein resides in the basolateral cell membrane. Essential for normal retinal maturation and development. Acts as a retinal cell surface receptor for NXNL1 and plays an important role in NXNL1-mediated survival of retinal cone photoreceptors. In association with glucose transporter SLC16A1/GLUT1 and NXNL1, promotes retinal cone survival by enhancing aerobic glycolysis and accelerating the entry of glucose into photoreceptors. May act as a potent stimulator of IL6 secretion in multiple cell lines that include monocytes. Functionally, (Microbial infection) Erythrocyte receptor for P.falciparum RH5 which is essential for erythrocyte invasion by the merozoite stage of P.falciparum isolates 3D7 and Dd2. Its function is as follows. Signaling receptor for cyclophilins, essential for PPIA/CYPA and PPIB/CYPB-dependent signaling related to chemotaxis and adhesion of immune cells. Plays an important role in targeting monocarboxylate transporters SLC16A1/GLUT1, SLC16A11 and SLC16A12 to the plasma membrane. Acts as a coreceptor for vascular endothelial growth factor receptor 2 (KDR/VEGFR2) in endothelial cells enhancing its VEGFA-mediated activation and downstream signaling. Promotes angiogenesis through EPAS1/HIF2A-mediated up-regulation of VEGFA (isoform VEGF-165 and VEGF-121) and KDR/VEGFR2 in endothelial cells. Plays a key role in regulating tumor growth, invasion, metastasis and neoangiogenesis by stimulating the production and release of extracellular matrix metalloproteinases and KDR/VEGFR2 by both tumor cells and stromal cells (fibroblasts and endothelial cells). In terms of biological role, (Microbial infection) Erythrocyte receptor for P.falciparum RH5 which is essential for erythrocyte invasion by the merozoite stage of P.falciparum isolates 3D7, Dd2, 7G8 and HB3. Binding of P.falciparum RH5 results in BSG dimerization which triggers an increase in intracellular Ca(2+) in the erythrocyte. This essential step leads to a rearrangement of the erythrocyte cytoskeleton required for the merozoite invasion. (Microbial infection) Can facilitate human SARS coronavirus (SARS-CoV-1) infection via its interaction with virus-associated PPIA/CYPA. Functionally, (Microbial infection) Can facilitate HIV-1 infection via its interaction with virus-associated PPIA/CYPA. Its function is as follows. (Microbial infection) First described as a receptor for severe acute respiratory syndrome coronavirus 2 (SARS-CoV-2), it is not required for SARS-CoV-2 infection. In terms of biological role, (Microbial infection) Acts as a receptor for measles virus. (Microbial infection) Promotes entry of pentamer-expressing human cytomegalovirus (HCMV) into epithelial and endothelial cells. The protein is Basigin of Homo sapiens (Human).